Consider the following 350-residue polypeptide: Galactokinase (350 aa).

15 to 18 (EHTD) provides a ligand contact to substrate. ATP is bound by residues serine 47 and 99–105 (GAGLSSS). Mg(2+)-binding residues include serine 105 and glutamate 137. Aspartate 149 acts as the Proton acceptor in catalysis. A substrate-binding site is contributed by tyrosine 198.

This sequence belongs to the GHMP kinase family. GalK subfamily.

The protein localises to the cytoplasm. The enzyme catalyses alpha-D-galactose + ATP = alpha-D-galactose 1-phosphate + ADP + H(+). It participates in carbohydrate metabolism; galactose metabolism. Catalyzes the transfer of the gamma-phosphate of ATP to D-galactose to form alpha-D-galactose-1-phosphate (Gal-1-P). The polypeptide is Galactokinase (Pyrococcus horikoshii (strain ATCC 700860 / DSM 12428 / JCM 9974 / NBRC 100139 / OT-3)).